The sequence spans 133 residues: ATP synthase epsilon chain, chloroplastic (133 aa).

This sequence belongs to the ATPase epsilon chain family. In terms of assembly, F-type ATPases have 2 components, CF(1) - the catalytic core - and CF(0) - the membrane proton channel. CF(1) has five subunits: alpha(3), beta(3), gamma(1), delta(1), epsilon(1). CF(0) has three main subunits: a, b and c.

The protein resides in the plastid. It is found in the chloroplast thylakoid membrane. Its function is as follows. Produces ATP from ADP in the presence of a proton gradient across the membrane. The protein is ATP synthase epsilon chain, chloroplastic of Psilotum nudum (Whisk fern).